The chain runs to 82 residues: Small ribosomal subunit protein bS16 (82 aa).

Belongs to the bacterial ribosomal protein bS16 family.

The sequence is that of Small ribosomal subunit protein bS16 from Desulfosudis oleivorans (strain DSM 6200 / JCM 39069 / Hxd3) (Desulfococcus oleovorans).